We begin with the raw amino-acid sequence, 968 residues long: Phosphatidylserine decarboxylase 2 proenzyme (968 aa).

A signal peptide spans 1–25 (MAKVMRLIIFVCVALVAISVPAASS). Residues D500, H570, and S683 each act as charge relay system; for autoendoproteolytic cleavage activity in the active site. S683 serves as the catalytic Schiff-base intermediate with substrate; via pyruvic acid; for decarboxylase activity. S683 is modified (pyruvic acid (Ser); by autocatalysis).

Belongs to the phosphatidylserine decarboxylase family. Heterodimer of a large membrane-associated beta subunit and a small pyruvoyl-containing alpha subunit. It depends on pyruvate as a cofactor. Is synthesized initially as an inactive proenzyme. Formation of the active enzyme involves a self-maturation process in which the active site pyruvoyl group is generated from an internal serine residue via an autocatalytic post-translational modification. Two non-identical subunits are generated from the proenzyme in this reaction, and the pyruvate is formed at the N-terminus of the alpha chain, which is derived from the carboxyl end of the proenzyme. The autoendoproteolytic cleavage occurs by a canonical serine protease mechanism, in which the side chain hydroxyl group of the serine supplies its oxygen atom to form the C-terminus of the beta chain, while the remainder of the serine residue undergoes an oxidative deamination to produce ammonia and the pyruvoyl prosthetic group on the alpha chain. During this reaction, the Ser that is part of the protease active site of the proenzyme becomes the pyruvoyl prosthetic group, which constitutes an essential element of the active site of the mature decarboxylase.

The protein resides in the parasitophorous vacuole. The protein localises to the cytoplasmic vesicle. It localises to the secretory vesicle. The catalysed reaction is a 1,2-diacyl-sn-glycero-3-phospho-L-serine + H(+) = a 1,2-diacyl-sn-glycero-3-phosphoethanolamine + CO2. It functions in the pathway phospholipid metabolism; phosphatidylethanolamine biosynthesis; phosphatidylethanolamine from CDP-diacylglycerol: step 2/2. Functionally, catalyzes the formation of phosphatidylethanolamine (PtdEtn) from phosphatidylserine (PtdSer). Plays a central role in phospholipid metabolism and in the interorganelle trafficking of phosphatidylserine. Can act on liposomal and host cell PtdSer. This chain is Phosphatidylserine decarboxylase 2 proenzyme, found in Toxoplasma gondii (strain ATCC 50853 / GT1).